Reading from the N-terminus, the 597-residue chain is Aspartate--tRNA(Asp/Asn) ligase (597 aa).

E182 serves as a coordination point for L-aspartate. The segment at 206 to 209 is aspartate; that stretch reads QLFK. L-aspartate is bound at residue R228. Residues 228-230 and Q237 contribute to the ATP site; that span reads RDE. Residue H455 participates in L-aspartate binding. E489 provides a ligand contact to ATP. L-aspartate is bound at residue R496. Residue 541-544 participates in ATP binding; that stretch reads GFDR.

It belongs to the class-II aminoacyl-tRNA synthetase family. Type 1 subfamily. In terms of assembly, homodimer.

The protein resides in the cytoplasm. It catalyses the reaction tRNA(Asx) + L-aspartate + ATP = L-aspartyl-tRNA(Asx) + AMP + diphosphate. In terms of biological role, aspartyl-tRNA synthetase with relaxed tRNA specificity since it is able to aspartylate not only its cognate tRNA(Asp) but also tRNA(Asn). Reaction proceeds in two steps: L-aspartate is first activated by ATP to form Asp-AMP and then transferred to the acceptor end of tRNA(Asp/Asn). The polypeptide is Aspartate--tRNA(Asp/Asn) ligase (Desulfosudis oleivorans (strain DSM 6200 / JCM 39069 / Hxd3) (Desulfococcus oleovorans)).